The following is a 102-amino-acid chain: Large ribosomal subunit protein bL21 (102 aa).

Over residues 79–91 (RKDSKRKKGHRQP) the composition is skewed to basic residues. Positions 79 to 102 (RKDSKRKKGHRQPYTKLTIDKINA) are disordered.

The protein belongs to the bacterial ribosomal protein bL21 family. In terms of assembly, part of the 50S ribosomal subunit. Contacts protein L20.

Its function is as follows. This protein binds to 23S rRNA in the presence of protein L20. The chain is Large ribosomal subunit protein bL21 from Staphylococcus saprophyticus subsp. saprophyticus (strain ATCC 15305 / DSM 20229 / NCIMB 8711 / NCTC 7292 / S-41).